Here is a 375-residue protein sequence, read N- to C-terminus: 23S rRNA (uracil(747)-C(5))-methyltransferase RlmC (375 aa).

Positions 3, 11, 14, and 87 each coordinate [4Fe-4S] cluster. The S-adenosyl-L-methionine site is built by Q212, F241, E262, and N307. The active-site Nucleophile is the C334.

This sequence belongs to the class I-like SAM-binding methyltransferase superfamily. RNA M5U methyltransferase family. RlmC subfamily.

It catalyses the reaction uridine(747) in 23S rRNA + S-adenosyl-L-methionine = 5-methyluridine(747) in 23S rRNA + S-adenosyl-L-homocysteine + H(+). Functionally, catalyzes the formation of 5-methyl-uridine at position 747 (m5U747) in 23S rRNA. This Escherichia coli O17:K52:H18 (strain UMN026 / ExPEC) protein is 23S rRNA (uracil(747)-C(5))-methyltransferase RlmC.